The sequence spans 500 residues: Tyrosine decarboxylase 2 (500 aa).

Tandem repeats lie at residues 65–122 and 125–176. The interval 65-176 is 2 X approximate tandem repeats; that stretch reads EDIRQKIVPG…KFLNRFGKRS (112 aa). Substrate is bound at residue S89. Pyridoxal 5'-phosphate-binding residues include A153 and S154. Substrate is bound at residue H189. T248 and N302 together coordinate pyridoxal 5'-phosphate. K305 is modified (N6-(pyridoxal phosphate)lysine).

Belongs to the group II decarboxylase family. It depends on pyridoxal 5'-phosphate as a cofactor. As to expression, mostly expressed in bulbs, and, to a lower extent, in stems, roots, leaves and flowers.

It carries out the reaction L-tyrosine + H(+) = tyramine + CO2. Its pathway is alkaloid biosynthesis. In terms of biological role, catalyzes the decarboxylation of L-tyrosine to tyramine, which is converted to norbelladine, a precursor to all Amaryllidaceae alkaloids such as galanthamine, lycorine and haemanthamine, and including haemanthamine- and crinamine-type alkaloids, promising anticancer agents. This chain is Tyrosine decarboxylase 2, found in Narcissus pseudonarcissus (Daffodil).